Reading from the N-terminus, the 533-residue chain is Beta-1,4 N-acetylgalactosaminyltransferase 1 (533 aa).

The Cytoplasmic segment spans residues 1-7 (MWLGRRA). A helical; Signal-anchor for type II membrane protein transmembrane segment spans residues 8–25 (LCALVLLLACASLGLLYA). At 26-533 (STRDAPGLRL…KHRLQCMTSQ (508 aa)) the chain is on the lumenal side. N-linked (GlcNAc...) asparagine glycosylation is found at N79, N179, and N274. C429 and C476 are joined by a disulfide.

Belongs to the glycosyltransferase 2 family. As to quaternary structure, homodimer; disulfide-linked.

It is found in the golgi apparatus membrane. It carries out the reaction a ganglioside GM3 (d18:1(4E)) + UDP-N-acetyl-alpha-D-galactosamine = a ganglioside GM2 (d18:1(4E)) + UDP + H(+). The enzyme catalyses a ganglioside GM3 + UDP-N-acetyl-alpha-D-galactosamine = a ganglioside GM2 + UDP + H(+). The catalysed reaction is a ganglioside GD3 + UDP-N-acetyl-alpha-D-galactosamine = a ganglioside GD2 + UDP + H(+). It catalyses the reaction a ganglioside GD3 (d18:1(4E)) + UDP-N-acetyl-alpha-D-galactosamine = a ganglioside GD2 (d18:1(4E)) + UDP + H(+). It carries out the reaction a beta-D-Gal-(1-&gt;4)-beta-D-Glc-(1&lt;-&gt;1)-Cer(d18:1(4E)) + UDP-N-acetyl-alpha-D-galactosamine = a ganglioside GA2 (d18:1(4E)) + UDP + H(+). The enzyme catalyses a ganglioside GD1a + UDP-N-acetyl-alpha-D-galactosamine = a ganglioside GalNAc-GD1a + UDP + H(+). The catalysed reaction is a ganglioside GT3 (d18:1(4E)) + UDP-N-acetyl-alpha-D-galactosamine = a ganglioside GT2 (d18:1(4E)) + UDP + H(+). It catalyses the reaction a beta-D-galactosyl-(1-&gt;4)-beta-D-glucosyl-(1&lt;-&gt;1)-ceramide + UDP-N-acetyl-alpha-D-galactosamine = a ganglioside GA2 + UDP + H(+). It carries out the reaction a neolactoside IV(3)-alpha-NeuGc-nLc4Cer + UDP-N-acetyl-alpha-D-galactosamine = a neolactoside IV(4)-beta-GalNAc-IV(3)-alpha-NeuGc-nLc4Cer + UDP + H(+). It functions in the pathway sphingolipid metabolism. Involved in the biosynthesis of gangliosides GM2, GD2, GT2 and GA2 from GM3, GD3, GT3 and GA3, respectively. The polypeptide is Beta-1,4 N-acetylgalactosaminyltransferase 1 (Homo sapiens (Human)).